We begin with the raw amino-acid sequence, 355 residues long: Peptide chain release factor 1 (355 aa).

At Gln-233 the chain carries N5-methylglutamine. A compositionally biased stretch (basic and acidic residues) spans 283 to 293; sequence EKNKDRADARK. Residues 283 to 304 are disordered; sequence EKNKDRADARKSQVGTGDRSER.

Belongs to the prokaryotic/mitochondrial release factor family. Methylated by PrmC. Methylation increases the termination efficiency of RF1.

It localises to the cytoplasm. Peptide chain release factor 1 directs the termination of translation in response to the peptide chain termination codons UAG and UAA. The sequence is that of Peptide chain release factor 1 from Finegoldia magna (strain ATCC 29328 / DSM 20472 / WAL 2508) (Peptostreptococcus magnus).